A 308-amino-acid chain; its full sequence is Eukaryotic translation initiation factor 3 subunit G (308 aa).

The disordered stretch occupies residues 1–23; that stretch reads MAPVAAPSTSQPAGGKPMNWADE. Residues 225 to 303 form the RRM domain; the sequence is PTLRVTNLSE…LILSCQWSLP (79 aa).

Belongs to the eIF-3 subunit G family. Component of the eukaryotic translation initiation factor 3 (eIF-3) complex.

The protein resides in the cytoplasm. RNA-binding component of the eukaryotic translation initiation factor 3 (eIF-3) complex, which is involved in protein synthesis of a specialized repertoire of mRNAs and, together with other initiation factors, stimulates binding of mRNA and methionyl-tRNAi to the 40S ribosome. The eIF-3 complex specifically targets and initiates translation of a subset of mRNAs involved in cell proliferation. This subunit can bind 18S rRNA. The protein is Eukaryotic translation initiation factor 3 subunit G of Mycosarcoma maydis (Corn smut fungus).